Reading from the N-terminus, the 141-residue chain is MARKVLGKISLQIAAGKATPAPPVGPALGQYGVNIMGFCKEYNARTANQAGYIVPVEITVFEDRSFTFVIKSPPASDLLKKAANIDKGSGEPNKKKIGKVPRAKLLEIAETKKEDLNASDIEAAVKMIEGTARSMGLEIVD.

It belongs to the universal ribosomal protein uL11 family. Part of the ribosomal stalk of the 50S ribosomal subunit. Interacts with L10 and the large rRNA to form the base of the stalk. L10 forms an elongated spine to which L12 dimers bind in a sequential fashion forming a multimeric L10(L12)X complex. One or more lysine residues are methylated.

In terms of biological role, forms part of the ribosomal stalk which helps the ribosome interact with GTP-bound translation factors. This chain is Large ribosomal subunit protein uL11, found in Syntrophomonas wolfei subsp. wolfei (strain DSM 2245B / Goettingen).